The chain runs to 975 residues: GPI inositol-deacylase (975 aa).

Residues 27–47 (STLVIIVGLLLLCIITSTHIS) traverse the membrane as a helical segment. Residue Asn49 is glycosylated (N-linked (GlcNAc...) asparagine). Ser210 is a catalytic residue. Residues Asn276, Asn384, Asn407, Asn419, and Asn488 are each glycosylated (N-linked (GlcNAc...) asparagine). The chain crosses the membrane as a helical span at residues 655–675 (LAFASIPISIIALVLCYQFYY). Asn696 is a glycosylation site (N-linked (GlcNAc...) asparagine). A run of 3 helical transmembrane segments spans residues 699-719 (LLIF…AILT), 751-771 (FVWW…FIIL), and 818-838 (VCFI…FILV). The N-linked (GlcNAc...) asparagine glycan is linked to Asn867. The next 3 helical transmembrane spans lie at 868–888 (VSFL…VVVF), 932–952 (NWLI…MYGI), and 955–975 (LYWV…LTIL).

Belongs to the GPI inositol-deacylase family.

The protein localises to the endoplasmic reticulum membrane. Its function is as follows. Involved in inositol deacylation of GPI-anchored proteins which plays important roles in the quality control and ER-associated degradation of GPI-anchored proteins. The sequence is that of GPI inositol-deacylase (BST1) from Kluyveromyces lactis (strain ATCC 8585 / CBS 2359 / DSM 70799 / NBRC 1267 / NRRL Y-1140 / WM37) (Yeast).